The sequence spans 359 residues: Chorismate synthase (359 aa).

Arg-47 is a binding site for NADP(+). FMN is bound by residues 123-125 (RSS), Gly-283, 298-302 (KPTSS), and Arg-326.

It belongs to the chorismate synthase family. Homotetramer. Requires FMNH2 as cofactor.

The enzyme catalyses 5-O-(1-carboxyvinyl)-3-phosphoshikimate = chorismate + phosphate. It functions in the pathway metabolic intermediate biosynthesis; chorismate biosynthesis; chorismate from D-erythrose 4-phosphate and phosphoenolpyruvate: step 7/7. Its function is as follows. Catalyzes the anti-1,4-elimination of the C-3 phosphate and the C-6 proR hydrogen from 5-enolpyruvylshikimate-3-phosphate (EPSP) to yield chorismate, which is the branch point compound that serves as the starting substrate for the three terminal pathways of aromatic amino acid biosynthesis. This reaction introduces a second double bond into the aromatic ring system. The polypeptide is Chorismate synthase (Chlamydia felis (strain Fe/C-56) (Chlamydophila felis)).